The following is a 383-amino-acid chain: Beta-1,3-galactosyltransferase 4 (383 aa).

Residues 1–8 (MPLSLFRR) are Cytoplasmic-facing. The chain crosses the membrane as a helical span at residues 9–29 (LLLAALLLVIIWTLFGPSGIG). Residues 30–383 (EELLSLSLAS…RCRVIAWLHS (354 aa)) lie on the Lumenal side of the membrane. Asn-149 carries an N-linked (GlcNAc...) asparagine glycan.

Belongs to the glycosyltransferase 31 family.

It localises to the golgi apparatus membrane. It carries out the reaction a ganglioside GM2 (d18:1(4E)) + UDP-alpha-D-galactose = a ganglioside GM1 (d18:1(4E)) + UDP + H(+). The enzyme catalyses a ganglioside GM2 + UDP-alpha-D-galactose = a ganglioside GM1 + UDP + H(+). It catalyses the reaction a ganglioside GD2 (d18:1(4E)) + UDP-alpha-D-galactose = a ganglioside GD1b (d18:1(4E)) + UDP + H(+). The catalysed reaction is a ganglioside GA2 (d18:1(4E)) + UDP-alpha-D-galactose = a ganglioside GA1 (d18:1(4E)) + UDP + H(+). The protein operates within protein modification; protein glycosylation. Involved in GM1/GD1B/GA1 ganglioside biosynthesis. The chain is Beta-1,3-galactosyltransferase 4 (B3GALT4) from Canis lupus familiaris (Dog).